Reading from the N-terminus, the 163-residue chain is Arginine repressor (163 aa).

It belongs to the ArgR family.

It is found in the cytoplasm. It participates in amino-acid biosynthesis; L-arginine biosynthesis [regulation]. Functionally, regulates arginine biosynthesis genes. The sequence is that of Arginine repressor from Anaeromyxobacter dehalogenans (strain 2CP-C).